The following is a 479-amino-acid chain: Serralysin C (479 aa).

The propeptide occupies 1 to 17 (MGKNLSLRQDDAQHALS). Position 188 (histidine 188) interacts with Zn(2+). Glutamate 189 is an active-site residue. 2 residues coordinate Zn(2+): histidine 192 and tyrosine 228. Ca(2+) is bound by residues arginine 265, glycine 267, aspartate 297, glycine 299, glycine 300, aspartate 302, threonine 339, glutamate 341, glycine 346, glycine 348, aspartate 350, asparagine 355, alanine 357, asparagine 359, glycine 363, glycine 364, alanine 365, glycine 366, aspartate 368, glycine 372, glycine 373, glycine 375, aspartate 377, glycine 381, glycine 382, alanine 383, glycine 384, aspartate 386, aspartate 395, aspartate 402, and aspartate 412. Hemolysin-type calcium-binding repeat units follow at residues 344 to 361 (IGGS…DNIL), 362 to 379 (QGGA…ADTL), and 380 to 397 (YGGA…QDST).

The protein belongs to the peptidase M10B family. The cofactor is Ca(2+). Requires Zn(2+) as cofactor.

It is found in the secreted. The catalysed reaction is Preferential cleavage of bonds with hydrophobic residues in P1'.. This chain is Serralysin C (prtC), found in Dickeya chrysanthemi (Pectobacterium chrysanthemi).